The primary structure comprises 423 residues: MYDTSLTLTEFDPELADAILHEEDRQETHVELIASENYASPLVMAIQNSVFTNKYAEGYLGKRYYSGCEYVDVAERLAIERAKVLFDCDYANVQPHAGAQANAAVFLALTNPGDTVMGMNLAQGGHLTHGNPSNFSGRHYKIVPYGLDSETGLIDYDEMERIALETRPKMLIGGFSAYSRHKDWARMRTIADKVGAIFWVDMAHVAGLVAAGEYPNPLPQAHVVTSTTHKTLRGPRGGIILAKGQSEDFYKKLNAAVFPGIQGGPLMHVIAAKAVAFKEALRPEFTVYQRQVVANARAMARIIQQRGYKIVSDGTDNHLLLIDLSAKPYTGKDADAALSDAYITTNKNSVPNDPRSPFVTSGLRIGTPAVTTRGFGVTECEQLAGWLCDVLDGLGAGNEELTVIRDRVREQVVALCHRYPVYQ.

Residues Leu-121 and 125–127 (GHL) contribute to the (6S)-5,6,7,8-tetrahydrofolate site. Lys-230 is modified (N6-(pyridoxal phosphate)lysine). Residue 356 to 358 (SPF) participates in (6S)-5,6,7,8-tetrahydrofolate binding.

It belongs to the SHMT family. Homodimer. Pyridoxal 5'-phosphate is required as a cofactor.

It is found in the cytoplasm. The catalysed reaction is (6R)-5,10-methylene-5,6,7,8-tetrahydrofolate + glycine + H2O = (6S)-5,6,7,8-tetrahydrofolate + L-serine. The protein operates within one-carbon metabolism; tetrahydrofolate interconversion. It functions in the pathway amino-acid biosynthesis; glycine biosynthesis; glycine from L-serine: step 1/1. Catalyzes the reversible interconversion of serine and glycine with tetrahydrofolate (THF) serving as the one-carbon carrier. This reaction serves as the major source of one-carbon groups required for the biosynthesis of purines, thymidylate, methionine, and other important biomolecules. Also exhibits THF-independent aldolase activity toward beta-hydroxyamino acids, producing glycine and aldehydes, via a retro-aldol mechanism. This chain is Serine hydroxymethyltransferase 2, found in Pectobacterium atrosepticum (strain SCRI 1043 / ATCC BAA-672) (Erwinia carotovora subsp. atroseptica).